We begin with the raw amino-acid sequence, 329 residues long: R-linalool synthase (329 aa).

Mg(2+) is bound at residue D79. The DDXXD motif signature appears at 79 to 83 (DDQFD). R172 lines the substrate pocket. Positions 218 and 222 each coordinate Mg(2+). Residues 218-226 (NELHSFEKD) carry the NXXXSXXXD motif motif. Substrate is bound at residue K225. D226 is a binding site for Mg(2+). A substrate-binding site is contributed by 308 to 309 (RY).

Belongs to the terpene synthase family. In terms of assembly, homodimer. Requires Mg(2+) as cofactor.

It carries out the reaction (2E)-geranyl diphosphate + H2O = (R)-linalool + diphosphate. The catalysed reaction is (2E,6E)-farnesyl diphosphate + H2O = (6E)-nerolidol + diphosphate. Its function is as follows. In vitro, catalyzes the formation of R-linalool from geranyl diphosphate (GPP). Can also accept farnesyl diphosphate (FPP) as substrate to produce trans-nerolidol. The sequence is that of R-linalool synthase from Streptomyces clavuligerus.